Here is a 71-residue protein sequence, read N- to C-terminus: Conotoxin Vc6.12 (71 aa).

Residues 1–19 form the signal peptide; sequence MQKLIILLLVAAVLMSTQA. A propeptide spanning residues 20–43 is cleaved from the precursor; that stretch reads LFQEKRPMKKINFLSKGKTDAEKQ. Cystine bridges form between cysteine 48–cysteine 62, cysteine 55–cysteine 66, and cysteine 61–cysteine 70.

Belongs to the conotoxin O2 superfamily. Expressed by the venom duct.

It is found in the secreted. Inhibits voltage-gated ion channels. This chain is Conotoxin Vc6.12, found in Conus victoriae (Queen Victoria cone).